Here is a 275-residue protein sequence, read N- to C-terminus: Methyltransferase str2 (275 aa).

Belongs to the methyltransferase superfamily. LaeA methyltransferase family.

It participates in mycotoxin biosynthesis. In terms of biological role, methyltransferase; part of the gene cluster that mediates the biosynthesis of strobilurin A, an antifungal polyketide that contains a key beta-methoxyacrylate toxophore that targets the complex III of the mitochondrial electron transport chain. Strobilurin biosynthesis begins with construction of benzoyl CoA by step-wise elimination of ammonia from phenylalanine by the phenylalanine ammonia-lyase str11, oxygenation by str8 and retro-Claisen reaction to form benzoic acid, which is activated to its CoA thiolester benzoyl CoA by the dedicated CoA ligase str10. Benzoyl CoA forms the starter unit for the highly reducing polyketide synthase stpks1 that produces the polyketide prestrobilutin A. The FAD-dependent oxygenase str9 then catalyzes the key oxidative rearrangement responsible for the creation of the beta-methoxyacrylate toxophore. Str9 performs epoxidation of the 2,3 olefin of prestrobilutin A, followed by Meinwald rearrangement to furnish the aldehyde intermediate. Rapid enolization of the aldehyde intermediate would give the beta-methoxyacrylate skeleton and methylations catalyzed by str2 and str3 complete the synthesis and lead to the production of strobilurin A. The short-chain dehydrogenase stl2 and the dehydrogenase str4 play a role in the shunt pathway leading to the production of bolineol. The cluster encodes no obvious halogenase gene that could be involved in production of strobilurin B, nor any obvious dimethylallyl-transferase that could be involved in the production of strobilurin G. It is possible that unknown proteins encoded in, or near, the cluster (such as str1 or stl1) may form new classes of halogenases or dimethylally-transferases, or that the responsible genes are located elsewhere on the genome. Similarly, proteins encoded by str5/str6 hydrolases appear to have no chemical role in the biosynthesis of strobilurin A. Finally, no obvious self-resistance gene is found within the cluster. This Strobilurus tenacellus protein is Methyltransferase str2.